The sequence spans 466 residues: Argininosuccinate lyase (466 aa).

The protein belongs to the lyase 1 family. Argininosuccinate lyase subfamily.

The protein localises to the cytoplasm. The catalysed reaction is 2-(N(omega)-L-arginino)succinate = fumarate + L-arginine. Its pathway is amino-acid biosynthesis; L-arginine biosynthesis; L-arginine from L-ornithine and carbamoyl phosphate: step 3/3. In Clostridium perfringens (strain ATCC 13124 / DSM 756 / JCM 1290 / NCIMB 6125 / NCTC 8237 / Type A), this protein is Argininosuccinate lyase.